Consider the following 368-residue polypeptide: CST complex subunit STN1 (368 aa).

The interval 2-192 (AVSLGDDDAD…KCYDQPFKMP (191 aa)) is interaction with CTC1. Positions 58–162 (VDVLGIVVYK…EIKATSFYKV (105 aa)) form a DNA-binding region, OB. Winged helix-turn-helix (wHTH) regions lie at residues 201–295 (AGGS…NVTE) and 296–368 (QDKD…YIVL).

The protein belongs to the CTC1 family. As to quaternary structure, component of the CST complex.

The protein localises to the nucleus. Its subcellular location is the chromosome. The protein resides in the telomere. Its function is as follows. Component of the CST complex proposed to act as a specialized replication factor promoting DNA replication under conditions of replication stress or natural replication barriers such as the telomere duplex. The CST complex binds single-stranded DNA with high affinity in a sequence-independent manner, while isolated subunits bind DNA with low affinity by themselves. Initially the CST complex has been proposed to protect telomeres from DNA degradation. However, the CST complex has been shown to be involved in several aspects of telomere replication. This Danio rerio (Zebrafish) protein is CST complex subunit STN1.